The chain runs to 316 residues: Ester hydrolase C11orf54 homolog (316 aa).

3 residues coordinate Zn(2+): H267, H269, and H279.

As to quaternary structure, monomer. Zn(2+) is required as a cofactor.

The protein resides in the nucleus. It localises to the cytoplasm. Functionally, exhibits ester hydrolase activity on the substrate p-nitrophenyl acetate, in vitro. May regulate DNA damage and repair by regulating HIF1A degradation via chaperone-mediated autophagy (CMA). This chain is Ester hydrolase C11orf54 homolog, found in Xenopus laevis (African clawed frog).